We begin with the raw amino-acid sequence, 304 residues long: tRNA-uridine aminocarboxypropyltransferase 1 (304 aa).

Ser2 is subject to N-acetylserine. The short motif at 206–209 is the DXTW element; sequence DSTW.

The protein belongs to the TDD superfamily. DTWD1 family.

It is found in the nucleus. The enzyme catalyses a uridine in tRNA + S-adenosyl-L-methionine = a 3-[(3S)-3-amino-3-carboxypropyl]uridine in tRNA + S-methyl-5'-thioadenosine + H(+). Catalyzes the formation of 3-(3-amino-3-carboxypropyl)uridine (acp3U) at position 20 in the D-loop of several cytoplasmic tRNAs (acp3U(20)). This is tRNA-uridine aminocarboxypropyltransferase 1 from Pongo abelii (Sumatran orangutan).